The sequence spans 459 residues: Cobyrinate a,c-diamide synthase (459 aa).

The region spanning 252–446 is the GATase cobBQ-type domain; the sequence is TLALADDEAF…LHVHFAQRPE (195 aa). Cys334 acts as the Nucleophile in catalysis.

This sequence belongs to the CobB/CbiA family. Monomer. Requires Mg(2+) as cofactor.

It carries out the reaction cob(II)yrinate + 2 L-glutamine + 2 ATP + 2 H2O = cob(II)yrinate a,c diamide + 2 L-glutamate + 2 ADP + 2 phosphate + 2 H(+). The protein operates within cofactor biosynthesis; adenosylcobalamin biosynthesis; cob(II)yrinate a,c-diamide from sirohydrochlorin (anaerobic route): step 10/10. Functionally, catalyzes the ATP-dependent amidation of the two carboxylate groups at positions a and c of cobyrinate, using either L-glutamine or ammonia as the nitrogen source. Is able to use other nucleotide triphosphates as substrate, such as GTP or UTP, although less efficiently than ATP. The protein is Cobyrinate a,c-diamide synthase of Salmonella typhimurium (strain LT2 / SGSC1412 / ATCC 700720).